Here is a 442-residue protein sequence, read N- to C-terminus: CAAX prenyl protease 1 homolog (442 aa).

Residues 1–62 (MDASCLFKAL…KARDYKIDNH (62 aa)) lie on the Lumenal side of the membrane. Residues 63–83 (LFGFFHSWFNQLLLTAQLIGG) traverse the membrane as a helical segment. Y84 is a topological domain (cytoplasmic). A helical transmembrane segment spans residues 85-105 (YPFLWYATASYPLHVAVFLSI). Over 106 to 146 (NSIIETIIDLPWDLYSTFIIEDAHGFNKQTIGFYFVDKIKK) the chain is Lumenal. A helical transmembrane segment spans residues 147-167 (MLVGFALTMPIVYGIEWIIVN). The Cytoplasmic portion of the chain corresponds to 168–170 (GGP). The chain crosses the membrane as a helical span at residues 171–191 (YFFVYIWLFVSVVVLLLMTIY). The Lumenal segment spans residues 192 to 311 (PTFIAPLFDK…ELGHWALWHT (120 aa)). Zn(2+) is bound at residue H301. E302 is an active-site residue. H305 lines the Zn(2+) pocket. The helical transmembrane segment at 312–332 (LINLVITEVNLFFSFAVFGYF) threads the bilayer. Over 333–349 (YKWEALYQGFGYHDTPP) the chain is Cytoplasmic. A helical membrane pass occupies residues 350 to 370 (VIGMMLIFQFVLALYNQLASI). The Lumenal portion of the chain corresponds to 371-442 (GMVIHSRSAE…AVRAFQAKNK (72 aa)). A Zn(2+)-binding site is contributed by E380. D384 acts as the Proton donor in catalysis.

It belongs to the peptidase M48A family. Zn(2+) is required as a cofactor.

The protein resides in the endoplasmic reticulum membrane. The protein localises to the membrane. It carries out the reaction Hydrolyzes the peptide bond -P2-(S-farnesyl or geranylgeranyl)C-P1'-P2'-P3'-COOH where P1' and P2' are amino acids with aliphatic side chains and P3' is any C-terminal residue.. In terms of biological role, proteolytically removes the C-terminal three residues of farnesylated proteins. The chain is CAAX prenyl protease 1 homolog from Caenorhabditis elegans.